Here is a 525-residue protein sequence, read N- to C-terminus: Vesicular inhibitory amino acid transporter (525 aa).

Residues 1–132 lie on the Cytoplasmic side of the membrane; it reads MATLLRSKLS…WNVTNAIQGM (132 aa). Residues 83-107 are disordered; it reads IHYQRGSGAPLPPSGSKDQVGGGGE. Residues 133-153 form a helical membrane-spanning segment; the sequence is FVLGLPYAILHGGYLGLFLII. The Lumenal, vesicle segment spans residues 154–204; the sequence is FAAVVCCYTGKILIACLYEENEDGEVVRVRDSYVAIANACCAPRFPTLGGR. Tyr186 bears the 3'-nitrotyrosine mark. A helical membrane pass occupies residues 205–225; the sequence is VVNVAQIIELVMTCILYVVVS. Residues 226 to 265 lie on the Cytoplasmic side of the membrane; that stretch reads GNLMYNSFPGLPVSQKSWSIIATAVLLPCAFLKNLKAVSK. A helical membrane pass occupies residues 266–286; it reads FSLLCTLAHFVINILVIAYCL. The Lumenal, vesicle portion of the chain corresponds to 287-305; sequence SRARDWAWEKVKFYIDVKK. The chain crosses the membrane as a helical span at residues 306-326; that stretch reads FPISIGIIVFSYTSQIFLPSL. The Cytoplasmic segment spans residues 327-341; that stretch reads EGNMQQPSEFHCMMN. A helical transmembrane segment spans residues 342–362; sequence WTHIAACVLKGLFALVAYLTW. Over 363–383 the chain is Lumenal, vesicle; that stretch reads ADETKEVITDNLPGSIRAVVN. Residues 384–404 form a helical membrane-spanning segment; sequence IFLVAKALLSYPLPFFAAVEV. The Cytoplasmic portion of the chain corresponds to 405-438; that stretch reads LEKSLFQEGSRAFFPACYSGDGRLKSWGLTLRCA. The chain crosses the membrane as a helical span at residues 439–459; sequence LVVFTLLMAIYVPHFALLMGL. At 460-461 the chain is on the lumenal, vesicle side; the sequence is TG. A helical transmembrane segment spans residues 462–482; that stretch reads SLTGAGLCFLLPSLFHLRLLW. Residues 483-489 lie on the Cytoplasmic side of the membrane; the sequence is RKLLWHQ. A helical membrane pass occupies residues 490–510; sequence VFFDVAIFVIGGICSVSGFVH. At 511–525 the chain is on the lumenal, vesicle side; the sequence is SLEGLIEAYRTNAED.

Belongs to the amino acid/polyamine transporter 2 family. In terms of tissue distribution, retina. Expressed throughout the horizontal cells or more specifically at the terminals.

Its subcellular location is the cytoplasmic vesicle membrane. It localises to the presynapse. The enzyme catalyses 4-aminobutanoate(out) + n H(+)(in) = 4-aminobutanoate(in) + n H(+)(out). The catalysed reaction is glycine(out) + n H(+)(in) = glycine(in) + n H(+)(out). It catalyses the reaction beta-alanine(out) + n H(+)(in) = beta-alanine(in) + n H(+)(out). Antiporter that exchanges vesicular protons for cytosolic 4-aminobutanoate or to a lesser extend glycine, thus allowing their secretion from nerve terminals. The transport is equally dependent on the chemical and electrical components of the proton gradient. May also transport beta-alanine. Acidification of GABAergic synaptic vesicles is a prerequisite for 4-aminobutanoate uptake. This is Vesicular inhibitory amino acid transporter from Homo sapiens (Human).